The chain runs to 216 residues: UPF0502 protein Ent638_1581 (216 aa).

The protein belongs to the UPF0502 family.

This chain is UPF0502 protein Ent638_1581, found in Enterobacter sp. (strain 638).